The sequence spans 338 residues: Beta-ketoacyl-[acyl-carrier-protein] synthase III (338 aa).

Active-site residues include Cys119 and His261. The interval 262-266 is ACP-binding; sequence QANQR. Asn291 is a catalytic residue.

The protein belongs to the thiolase-like superfamily. FabH family. As to quaternary structure, homodimer.

The protein resides in the cytoplasm. The catalysed reaction is malonyl-[ACP] + acetyl-CoA + H(+) = 3-oxobutanoyl-[ACP] + CO2 + CoA. Its pathway is lipid metabolism; fatty acid biosynthesis. In terms of biological role, catalyzes the condensation reaction of fatty acid synthesis by the addition to an acyl acceptor of two carbons from malonyl-ACP. Catalyzes the first condensation reaction which initiates fatty acid synthesis and may therefore play a role in governing the total rate of fatty acid production. Possesses both acetoacetyl-ACP synthase and acetyl transacylase activities. Its substrate specificity determines the biosynthesis of branched-chain and/or straight-chain of fatty acids. In Prochlorococcus marinus (strain SARG / CCMP1375 / SS120), this protein is Beta-ketoacyl-[acyl-carrier-protein] synthase III.